The following is a 260-amino-acid chain: Uroplakin-1b (260 aa).

At 1-15 (MAKDDSTVRCFQGLL) the chain is on the cytoplasmic side. A helical membrane pass occupies residues 16-36 (IFGHVIVGMCGIALTAECIFF). At 37 to 59 (VSDQHSLYPLLEATNNDDIFGAA) the chain is on the extracellular side. Residues 60–80 (WIGMFVGICLFCLSVLAIVGI) traverse the membrane as a helical segment. Topologically, residues 81 to 86 (MKSNRK) are cytoplasmic. A helical transmembrane segment spans residues 87–107 (ILLAYFIMMFIVYGFEVASCI). Residues 108-229 (TAATQRDFFT…ELISGPMDRH (122 aa)) are Extracellular-facing. Residues 230-250 (AWGVAWFGFAILCWTFWVLLG) form a helical membrane-spanning segment. The Cytoplasmic portion of the chain corresponds to 251–260 (TMFYWSRIEY).

This sequence belongs to the tetraspanin (TM4SF) family. In terms of assembly, heterodimer with uroplakin-3A (UPK3A) or uroplakin-3B (UPK3B). Post-translationally, N-glycosylated with high-mannose oligosaccharides.

It localises to the membrane. Functionally, component of the asymmetric unit membrane (AUM); a highly specialized biomembrane elaborated by terminally differentiated urothelial cells. May play an important role in normal bladder epithelial physiology, possibly in regulating membrane permeability of superficial umbrella cells or in stabilizing the apical membrane through AUM/cytoskeletal interactions. This Rattus norvegicus (Rat) protein is Uroplakin-1b (Upk1b).